We begin with the raw amino-acid sequence, 371 residues long: Putative glutamate--cysteine ligase 2 (371 aa).

This sequence belongs to the glutamate--cysteine ligase type 2 family. YbdK subfamily.

The catalysed reaction is L-cysteine + L-glutamate + ATP = gamma-L-glutamyl-L-cysteine + ADP + phosphate + H(+). In terms of biological role, ATP-dependent carboxylate-amine ligase which exhibits weak glutamate--cysteine ligase activity. The sequence is that of Putative glutamate--cysteine ligase 2 from Burkholderia cenocepacia (strain HI2424).